The following is an 874-amino-acid chain: Alanine--tRNA ligase (874 aa).

4 residues coordinate Zn(2+): H562, H566, C664, and H668.

Belongs to the class-II aminoacyl-tRNA synthetase family. The cofactor is Zn(2+).

It localises to the cytoplasm. It catalyses the reaction tRNA(Ala) + L-alanine + ATP = L-alanyl-tRNA(Ala) + AMP + diphosphate. Functionally, catalyzes the attachment of alanine to tRNA(Ala) in a two-step reaction: alanine is first activated by ATP to form Ala-AMP and then transferred to the acceptor end of tRNA(Ala). Also edits incorrectly charged Ser-tRNA(Ala) and Gly-tRNA(Ala) via its editing domain. The polypeptide is Alanine--tRNA ligase (Shewanella baltica (strain OS155 / ATCC BAA-1091)).